Consider the following 404-residue polypeptide: Cysteine desulfurase IscS (404 aa).

Pyridoxal 5'-phosphate-binding positions include 75-76 (AT), Asn155, Gln183, and 203-205 (SGH). Lys206 bears the N6-(pyridoxal phosphate)lysine mark. Position 243 (Thr243) interacts with pyridoxal 5'-phosphate. Cys328 acts as the Cysteine persulfide intermediate in catalysis. Cys328 provides a ligand contact to [2Fe-2S] cluster.

This sequence belongs to the class-V pyridoxal-phosphate-dependent aminotransferase family. NifS/IscS subfamily. In terms of assembly, homodimer. Forms a heterotetramer with IscU, interacts with other sulfur acceptors. Requires pyridoxal 5'-phosphate as cofactor.

The protein localises to the cytoplasm. It carries out the reaction (sulfur carrier)-H + L-cysteine = (sulfur carrier)-SH + L-alanine. It participates in cofactor biosynthesis; iron-sulfur cluster biosynthesis. Functionally, master enzyme that delivers sulfur to a number of partners involved in Fe-S cluster assembly, tRNA modification or cofactor biosynthesis. Catalyzes the removal of elemental sulfur atoms from cysteine to produce alanine. Functions as a sulfur delivery protein for Fe-S cluster synthesis onto IscU, an Fe-S scaffold assembly protein, as well as other S acceptor proteins. The sequence is that of Cysteine desulfurase IscS from Mannheimia succiniciproducens (strain KCTC 0769BP / MBEL55E).